A 442-amino-acid polypeptide reads, in one-letter code: Vacuolar zinc transporter ZRC1 (442 aa).

Topologically, residues 1–8 (MITGKELR) are cytoplasmic. A helical transmembrane segment spans residues 9–29 (IISLLTLDTVFFLLEITIGYM). Residues 30-32 (SHS) lie on the Vacuolar side of the membrane. The helical transmembrane segment at 33 to 53 (LALIADSFHMLNDIISLLVAL) threads the bilayer. The Cytoplasmic segment spans residues 54 to 75 (WAVDVAKNRGPDAKYTYGWKRA). A helical transmembrane segment spans residues 76–96 (EILGALINAVFLIALCFSIMI). Residues 97–112 (EALQRLIEPQEIQNPR) lie on the Vacuolar side of the membrane. Residues 113-133 (LVLYVGVAGLISNVVGLFLFH) form a helical membrane-spanning segment. Residues 134–235 (DHGSDSLHSH…GHRSLNMHGV (102 aa)) lie on the Cytoplasmic side of the membrane. 3 short sequence motifs (histidine repeat) span residues 141-145 (HSHSH), 163-167 (HSHSH), and 216-220 (HDHSH). 2 disordered regions span residues 141 to 170 (HSHS…HASL) and 208 to 227 (QPLL…KPGH). Residues 149 to 170 (ESGNNDLDIESNATHSHSHASL) are compositionally biased toward polar residues. The segment covering 212-224 (NHDDHDHSHESKK) has biased composition (basic and acidic residues). The helical transmembrane segment at 236–256 (FLHVLGDALGNIGVIAAALFI) threads the bilayer. The Vacuolar portion of the chain corresponds to 257–265 (WKTEYSWRY). The chain crosses the membrane as a helical span at residues 266–286 (YSDPIVSLIITIIIFSSALPL). The Cytoplasmic segment spans residues 287–442 (SRRASRILLQ…AVNCNTSNCL (156 aa)). Lys357 is covalently cross-linked (Glycyl lysine isopeptide (Lys-Gly) (interchain with G-Cter in ubiquitin)). Phosphoserine is present on residues Ser387, Ser393, and Ser397. A disordered region spans residues 391 to 419 (GGSPSSSQEAFDSHGNTEHGRKKRSPTAY).

It belongs to the cation diffusion facilitator (CDF) transporter (TC 2.A.4) family. SLC30A subfamily.

It is found in the vacuole membrane. The catalysed reaction is Zn(2+)(in) = Zn(2+)(out). Functionally, vacuolar transporter that regulates zinc homeostasis by mediating zinc transport and storage into the vacuole. ZRC1 senses zinc availability in the cytosol, which might be performed through the histidine repeat motifs, and transports zinc from the cytosol to the vacuole if zinc in cytosol is abundant, conferring resistance to zinc toxicity. Plays a role in resistance to zinc shock resulting from sudden influx of zinc into cytoplasm when ZRT1 and ZRT2 are induced in response to zinc depletion. This chain is Vacuolar zinc transporter ZRC1, found in Saccharomyces cerevisiae (strain ATCC 204508 / S288c) (Baker's yeast).